The following is a 309-amino-acid chain: Probable 2,4-dienoyl-CoA reductase 3 [(3E)-enoyl-CoA-producing] (309 aa).

NADP(+)-binding positions include 32–37, R57, and D83; that span reads GGGTGI. R57 lines the substrate pocket. The substrate site is built by F116 and S124. Residue Y166 is the Proton acceptor of the active site. NADP(+)-binding positions include K181 and 207-210; that span reads PGPI. Substrate is bound at residue R218.

Belongs to the short-chain dehydrogenases/reductases (SDR) family. 2,4-dienoyl-CoA reductase subfamily.

The catalysed reaction is a (2E,4E)-dienoyl-CoA + NADPH + H(+) = a 4,5-saturated-(3E)-enoyl-CoA + NADP(+). The enzyme catalyses a (2E,4Z)-dienoyl-CoA + NADPH + H(+) = a 4,5-saturated-(3E)-enoyl-CoA + NADP(+). Functionally, auxiliary enzyme of beta-oxidation. It participates in the metabolism of unsaturated fatty enoyl-CoA esters having double bonds in both even- and odd-numbered positions. Catalyzes the NADP-dependent reduction of 2,4-dienoyl-CoA to yield trans-3-enoyl-CoA. This chain is Probable 2,4-dienoyl-CoA reductase 3 [(3E)-enoyl-CoA-producing], found in Caenorhabditis elegans.